A 384-amino-acid polypeptide reads, in one-letter code: Glycine-rich cell wall structural protein 1 (384 aa).

Residues 1 to 27 form the signal peptide; it reads MGSSQKWVIGLLLFSSIFFELTAITLA.

It localises to the secreted. Its subcellular location is the cell wall. Responsible for plasticity of the cell wall. The protein is Glycine-rich cell wall structural protein 1 (GRP-1) of Petunia hybrida (Petunia).